Reading from the N-terminus, the 663-residue chain is Polyunsaturated fatty acid lipoxygenase ALOX15 (663 aa).

The region spanning 2-115 (GLYRVRVSTG…ILSLPEGTAR (114 aa)) is the PLAT domain. A Lipoxygenase domain is found at 116–663 (TVVDDPQGLF…PSRVENSVAI (548 aa)). Positions 361, 366, 541, 545, and 663 each coordinate Fe cation.

The protein belongs to the lipoxygenase family. In terms of assembly, interacts with PEBP1; in response to IL13/interleukin-13, prevents the interaction of PEBP1 with RAF1 to activate the ERK signaling cascade. Requires Fe cation as cofactor.

It localises to the cytoplasm. It is found in the cytosol. The protein localises to the cell membrane. Its subcellular location is the lipid droplet. The catalysed reaction is (5Z,8Z,11Z,14Z)-eicosatetraenoate + O2 = (12S)-hydroperoxy-(5Z,8Z,10E,14Z)-eicosatetraenoate. The enzyme catalyses (5Z,8Z,11Z,14Z)-eicosatetraenoate + O2 = (15S)-hydroperoxy-(5Z,8Z,11Z,13E)-eicosatetraenoate. It carries out the reaction (9Z,12Z)-octadecadienoate + O2 = (13S)-hydroperoxy-(9Z,11E)-octadecadienoate. It catalyses the reaction (5Z,8Z,11Z,14Z)-eicosatetraenoate + 2 O2 = (14R,15S)-dihydroperoxy-(5Z,8Z,10E,12E)-eicosatetraenoate. The catalysed reaction is (5Z,8Z,11Z,14Z)-eicosatetraenoate + 2 O2 = (8S,15S)-dihydroperoxy-(5Z,9E,11Z,13E)-eicosatetraenoate. The enzyme catalyses (14S,15R)-epoxy-(5Z,8Z,11Z)-eicosatrienoate + O2 = (8S)-hydroperoxy-(14S,15R)-epoxy-(5Z,9E,11Z)-eicosatrienoate. It carries out the reaction (14S,15R)-epoxy-(5Z,8Z,11Z)-eicosatrienoate + O2 = (12S)-hydroperoxy-(14S,15R)-epoxy-(5Z,8Z,10E)-eicosatrienoate. It catalyses the reaction (14R,15S)-epoxy-(5Z,8Z,11Z)-eicosatrienoate + O2 = (5S)-hydroperoxy-(14R,15S)-epoxy-(6E,8Z,11Z)-eicosatrienoate. The catalysed reaction is (14R,15S)-epoxy-(5Z,8Z,11Z)-eicosatrienoate + O2 = (12S)-hydroperoxy-(14R,15S)-epoxy-(5Z,8Z,10E)-eicosatrienoate. The enzyme catalyses (15R)-hydroperoxy-(5Z,8Z,11Z,13E)-eicosatetraenoate = 15-oxo-(5Z,8Z,11Z,13E)-eicosatetraenoate + H2O. It carries out the reaction (15S)-hydroperoxy-(5Z,8Z,11Z,13E)-eicosatetraenoate = (14S,15S)-epoxy-(5Z,8Z,10E,12E)-eicosatetraenoate + H2O. It catalyses the reaction (12S)-hydroperoxy-(5Z,8Z,10E,14Z)-eicosatetraenoate = (8S)-hydroxy-(11S,12S)-epoxy-(5Z,9E,14Z)-eicosatrienoate. The catalysed reaction is (4Z,7Z,10Z,13Z,16Z,19Z)-docosahexaenoate + O2 = 14-hydroperoxy-(4Z,7Z,10Z,12E,16Z,19Z)-docosahexaenoate. The enzyme catalyses (4Z,7Z,10Z,13Z,16Z)-docosapentaenoate + O2 = 14-hydroperoxy-(4Z,7Z,10Z,12E,16Z)-docosapentaenoate. It carries out the reaction (7Z,10Z,13Z,16Z,19Z)-docosapentaenoate + O2 = 14-hydroperoxy-(7Z,10Z,12E,16Z,19Z)-docosapentaenoate. It catalyses the reaction (4Z,7Z,10Z,13Z,16Z,19Z)-docosahexaenoate + O2 = (14S)-hydroperoxy-(4Z,7Z,10Z,12E,16Z,19Z)-docosahexaenoate. The catalysed reaction is (4Z,7Z,10Z,13Z,16Z,19Z)-docosahexaenoate + O2 = (17S)-hydroperoxy-(4Z,7Z,10Z,13Z,15E,19Z)-docosahexaenoate. The enzyme catalyses (7S)-hydroperoxy-(4Z,8E,10Z,13Z,16Z,19Z)-docosahexaenoate + O2 = (7S,14S)-dihydroperoxy-(4Z,8E,10Z,12E,16Z,19Z)-docosahexaenoate. It carries out the reaction (7S)-hydroperoxy-(4Z,8E,10Z,13Z,16Z,19Z)-docosahexaenoate + O2 = (7S,17S)-dihydroperoxy-(4Z,8E,10Z,13Z,15E,19Z)-docosahexaenoate. It catalyses the reaction (4Z,7Z,10Z,13Z,16Z,19Z)-docosahexaenoate + O2 = (11S)-hydroperoxy-(4Z,7Z,9E,13Z,16Z,19Z)-docosahexaenoate. The catalysed reaction is N-(5Z,8Z,11Z,14Z)-eicosatetraenoyl-taurine + O2 = N-(12S)-hydroperoxy-(5Z,8Z,10E,14Z)-eicosatetraenoyl-taurine. The enzyme catalyses N-(5Z,8Z,11Z,14Z)-eicosatetraenoyl-gamma-aminobutanoate + O2 = N-(12S)-hydroperoxy-(5Z,8Z,10E,14Z)-eicosatetraenoyl-gamma-aminobutanoate. It carries out the reaction N-(5Z,8Z,11Z,14Z)-eicosatetraenoyl-glycine + O2 = N-(12S)-hydroperoxy-(5Z,8Z,10E,14Z)-eicosatetraenoyl-glycine. It catalyses the reaction N-(5Z,8Z,11Z,14Z)-eicosatetraenoyl-L-alanine + O2 = N-(12S)-hydroperoxy-(5Z,8Z,10E,14Z)-eicosatetraenoyl-alanine. The catalysed reaction is N-(5Z,8Z,11Z,14Z)-eicosatetraenoyl-taurine + O2 = N-(15S)-hydroperoxy-(5Z,8Z,11Z,13E)-eicosatetraenoyl-taurine. The enzyme catalyses N-(5Z,8Z,11Z,14Z)-eicosatetraenoyl-gamma-aminobutanoate + O2 = N-(15S)-hydroperoxy-(5Z,8Z,11Z,13E)-eicosatetraenoyl-gamma-aminobutanoate. It carries out the reaction N-(5Z,8Z,11Z,14Z)-eicosatetraenoyl-glycine + O2 = N-(15S)-hydroperoxy-(5Z,8Z,11Z,13E)-eicosatetraenoyl-glycine. It catalyses the reaction N-(5Z,8Z,11Z,14Z)-eicosatetraenoyl-L-alanine + O2 = N-(15S)-hydroperoxy-(5Z,8Z,11Z,13E)-eicosatetraenoyl-alanine. The protein operates within lipid metabolism; hydroperoxy eicosatetraenoic acid biosynthesis. Non-heme iron-containing dioxygenase that catalyzes the stereo-specific peroxidation of free and esterified polyunsaturated fatty acids generating a spectrum of bioactive lipid mediators. It inserts peroxyl groups at C12 or C15 of arachidonate ((5Z,8Z,11Z,14Z)-eicosatetraenoate) producing both 12-hydroperoxyeicosatetraenoate/12-HPETE and 15-hydroperoxyeicosatetraenoate/15-HPETE. It may then act on 12-HPETE to produce hepoxilins, which may show pro-inflammatory properties. Can also peroxidize linoleate ((9Z,12Z)-octadecadienoate) to 13-hydroperoxyoctadecadienoate. May participate in the sequential oxidations of DHA ((4Z,7Z,10Z,13Z,16Z,19Z)-docosahexaenoate) to generate specialized pro-resolving mediators (SPMs)like resolvin D5 ((7S,17S)-diHPDHA) and (7S,14S)-diHPDHA, that actively down-regulate the immune response and have anti-aggregation properties with platelets. Can convert epoxy fatty acids to hydroperoxy-epoxides derivatives followed by an intramolecular nucleophilic substitution leading to the formation of monocyclic endoperoxides. Plays an important role during the maintenance of self-tolerance by peroxidizing membrane-bound phosphatidylethanolamine which can then signal the sorting process for clearance of apoptotic cells during inflammation and prevent an autoimmune response. In addition to its role in the immune and inflammatory responses, this enzyme may play a role in epithelial wound healing in the cornea through production of lipoxin A4 (LXA(4)) and docosahexaenoic acid-derived neuroprotectin D1 (NPD1; 10R,17S-HDHA), both lipid autacoids exhibit anti-inflammatory and neuroprotective properties. Furthermore, it may regulate actin polymerization which is crucial for several biological processes such as the phagocytosis of apoptotic cells. It is also implicated in the generation of endogenous ligands for peroxisome proliferator activated receptor (PPAR-gamma), hence modulating macrophage development and function. It may also exert a negative effect on skeletal development by regulating bone mass through this pathway. As well as participates in ER stress and downstream inflammation in adipocytes, pancreatic islets, and liver. Finally, it is also involved in the cellular response to IL13/interleukin-13. This is Polyunsaturated fatty acid lipoxygenase ALOX15 from Sus scrofa (Pig).